The primary structure comprises 662 residues: uncharacterized protein (662 aa).

Positions 145, 164, 173, 184, and 190 each coordinate FAD. Residues 638 to 662 (SRLETSGVPREGVQRPGSRLRRRPS) are disordered.

This sequence belongs to the FAD-binding monooxygenase family. Requires FAD as cofactor.

This is an uncharacterized protein from Sinorhizobium fredii (strain NBRC 101917 / NGR234).